The chain runs to 683 residues: Methionine--tRNA ligase (683 aa).

The 'HIGH' region signature appears at 15-25; sequence PYANGPIHLGH. Residues cysteine 146, cysteine 149, cysteine 159, and cysteine 162 each coordinate Zn(2+). A 'KMSKS' region motif is present at residues 332–336; that stretch reads KMSKS. Residue lysine 335 participates in ATP binding. The tRNA-binding domain occupies 582–683; the sequence is DFAKIDLRIA…EGALPGMRVK (102 aa).

This sequence belongs to the class-I aminoacyl-tRNA synthetase family. MetG type 1 subfamily. As to quaternary structure, homodimer. Requires Zn(2+) as cofactor.

It localises to the cytoplasm. The enzyme catalyses tRNA(Met) + L-methionine + ATP = L-methionyl-tRNA(Met) + AMP + diphosphate. In terms of biological role, is required not only for elongation of protein synthesis but also for the initiation of all mRNA translation through initiator tRNA(fMet) aminoacylation. The sequence is that of Methionine--tRNA ligase from Shewanella frigidimarina (strain NCIMB 400).